The chain runs to 132 residues: Small ribosomal subunit protein uS12 (132 aa).

At D89 the chain carries 3-methylthioaspartic acid. Residues 106 to 132 form a disordered region; sequence GVKDRKKSRSKYGTKKPKEAAKTAAKK. A compositionally biased stretch (basic residues) spans 109–120; sequence DRKKSRSKYGTK.

It belongs to the universal ribosomal protein uS12 family. Part of the 30S ribosomal subunit. Contacts proteins S8 and S17. May interact with IF1 in the 30S initiation complex.

In terms of biological role, with S4 and S5 plays an important role in translational accuracy. Functionally, interacts with and stabilizes bases of the 16S rRNA that are involved in tRNA selection in the A site and with the mRNA backbone. Located at the interface of the 30S and 50S subunits, it traverses the body of the 30S subunit contacting proteins on the other side and probably holding the rRNA structure together. The combined cluster of proteins S8, S12 and S17 appears to hold together the shoulder and platform of the 30S subunit. This Thermus thermophilus (strain ATCC BAA-163 / DSM 7039 / HB27) protein is Small ribosomal subunit protein uS12 (rpsL).